Consider the following 329-residue polypeptide: Phenylalanine--tRNA ligase alpha subunit (329 aa).

Position 254 (Glu-254) interacts with Mg(2+).

Belongs to the class-II aminoacyl-tRNA synthetase family. Phe-tRNA synthetase alpha subunit type 1 subfamily. As to quaternary structure, tetramer of two alpha and two beta subunits. Mg(2+) is required as a cofactor.

It is found in the cytoplasm. The catalysed reaction is tRNA(Phe) + L-phenylalanine + ATP = L-phenylalanyl-tRNA(Phe) + AMP + diphosphate + H(+). The sequence is that of Phenylalanine--tRNA ligase alpha subunit from Haemophilus influenzae (strain 86-028NP).